The sequence spans 977 residues: Probable UDP-N-acetylglucosamine--peptide N-acetylglucosaminyltransferase SEC (977 aa).

TPR repeat units lie at residues 2 to 35, 53 to 86, 87 to 120, 121 to 154, 155 to 188, 189 to 222, 223 to 256, 257 to 290, 291 to 324, 325 to 358, 359 to 392, 393 to 426, 427 to 460, and 461 to 494; these read ISSKNGAAMISRPVFLSDRVDEVFSRKLDLSVSS, DDARLALAHQLYKGGDFKQALEHSNMVYQRNPLR, TDNLLLIGAIYYQLQEYDMCIARNEEALRIQPQF, AECYGNMANAWKEKGDTDRAIRYYLIAIELRPNF, ADAWSNLASAYMRKGRLSEATQCCQQALSLNPLL, VDAHSNLGNLMKAQGLIHEAYSCYLEAVRIQPTF, AIAWSNLAGLFMESGDLNRALQYYKEAVKLKPAF, PDAYLNLGNVYKALGRPTEAIMCYQHALQMRPNS, AMAFGNIASIYYEQGQLDLAIRHYKQALSRDPRF, LEAYNNLGNALKDIGRVDEAVRCYNQCLALQPNH, PQAMANLGNIYMEWNMMGPASSLFKATLAVTTGL, SAPFNNLAIIYKQQGNYSDAISCYNEVLRIDPLA, ADALVNRGNTYKEIGRVTEAIQDYMHAINFRPTM, and AEAHANLASAYKDSGHVEAAITSYKQALLLRPDF. The interval 495–977 is catalytic region; the sequence is PEATCNLLHT…ENDLEFPHDR (483 aa).

Belongs to the glycosyltransferase 41 family. O-GlcNAc transferase subfamily. Interacts with TCP14 and TCP15. Interacts with ATX1.

The catalysed reaction is L-seryl-[protein] + UDP-N-acetyl-alpha-D-glucosamine = 3-O-(N-acetyl-beta-D-glucosaminyl)-L-seryl-[protein] + UDP + H(+). The enzyme catalyses L-threonyl-[protein] + UDP-N-acetyl-alpha-D-glucosamine = 3-O-(N-acetyl-beta-D-glucosaminyl)-L-threonyl-[protein] + UDP + H(+). The protein operates within protein modification; protein glycosylation. Its function is as follows. O-linked N-acetylglucosamine transferase (OGT) that mediates O-glycosylation of capsid protein (CP) of virus in case of infection by Plum pox virus. OGTs catalyze the addition of nucleotide-activated sugars directly onto the polypeptide through O-glycosidic linkage with the hydroxyl of serine or threonine. Probably acts by adding O-linked sugars to yet unknown proteins. Its OGT activity has been proved in vitro but not in vivo. Required with SPY for gamete and seed development. Mediates O-glycosylation of the DELLA protein RGA, a repressor of the gibberellin (GA) signaling pathway. O-glycosylation by SEC inhibits RGA binding to four of its interactors PIF3, PIF4, JAZ1, and BZR1 that are key regulators in light, jasmonate, and brassinosteroid signaling pathways, respectively. Activates ATX1 through O-GlcNAc modification to augment ATX1-mediated H3K4me3 histone epigenetic modification at FLC locus, thus preventing premature flowering. This chain is Probable UDP-N-acetylglucosamine--peptide N-acetylglucosaminyltransferase SEC, found in Arabidopsis thaliana (Mouse-ear cress).